The primary structure comprises 246 residues: Pyruvate formate-lyase 1-activating enzyme (246 aa).

Positions 16-239 (VDGPGIRFIT…MERVKGILEQ (224 aa)) constitute a Radical SAM core domain. Residues C30, C34, and C37 each coordinate [4Fe-4S] cluster. S-adenosyl-L-methionine-binding positions include 36 to 38 (YCH), G79, 130 to 132 (DLK), and H203.

This sequence belongs to the organic radical-activating enzymes family. [4Fe-4S] cluster is required as a cofactor.

The protein resides in the cytoplasm. The catalysed reaction is glycyl-[formate C-acetyltransferase] + reduced [flavodoxin] + S-adenosyl-L-methionine = glycin-2-yl radical-[formate C-acetyltransferase] + semiquinone [flavodoxin] + 5'-deoxyadenosine + L-methionine + H(+). Activation of pyruvate formate-lyase 1 under anaerobic conditions by generation of an organic free radical, using S-adenosylmethionine and reduced flavodoxin as cosubstrates to produce 5'-deoxy-adenosine. This chain is Pyruvate formate-lyase 1-activating enzyme (pflA), found in Escherichia coli O157:H7.